The primary structure comprises 1016 residues: Enhancer of polycomb-like protein 1 (1016 aa).

5 disordered regions span residues 1 to 50, 96 to 119, 450 to 488, 499 to 518, and 842 to 1016; these read MAIH…NDLE, LLGS…DASV, KEED…TIGT, GQVH…VKLP, and ARMR…PNRK. Polar residues predominate over residues 35–50; that stretch reads YKQSDLPTLNASNDLE. 2 stretches are compositionally biased toward basic and acidic residues: residues 103-116 and 457-473; these read DGDK…KKTD and ESSK…DSSR. Polar residues predominate over residues 475 to 488; that stretch reads GSATSMPGSATIGT. The span at 842 to 883 shows a compositional bias: low complexity; that stretch reads ARMRTLQQQQRNNKQQAAGQSSGSSSASLGSNTNSNSSISGQ. Over residues 884-902 the composition is skewed to polar residues; sequence ADQGQTNLTNSGITRQGGA. A compositionally biased stretch (low complexity) spans 904–923; the sequence is VNGSQTSTTNNTRSSVSGGS. A compositionally biased stretch (polar residues) spans 928-956; sequence LPTQSSQRSNTNSPLLASQPQGYSQQQKF. Over residues 960-971 the composition is skewed to low complexity; that stretch reads PPTSQSQSQSPT. Residues 976-994 are compositionally biased toward polar residues; the sequence is QLQTSKMYNKHGSNITPSN.

Belongs to the enhancer of polycomb family. Component of the NuA4 histone acetyltransferase complex.

The protein localises to the nucleus. Its function is as follows. Component of the NuA4 histone acetyltransferase complex which is involved in transcriptional activation of selected genes principally by acetylation of nucleosomal histone H4 and H2A. The NuA4 complex is also involved in DNA repair. Involved in gene silencing by neighboring heterochromatin, blockage of the silencing spreading along the chromosome, and required for cell cycle progression through G2/M. The chain is Enhancer of polycomb-like protein 1 (EPL1) from Debaryomyces hansenii (strain ATCC 36239 / CBS 767 / BCRC 21394 / JCM 1990 / NBRC 0083 / IGC 2968) (Yeast).